Consider the following 279-residue polypeptide: Small ribosomal subunit protein uS2 (279 aa).

It belongs to the universal ribosomal protein uS2 family. Component of the small ribosomal subunit. Mature ribosomes consist of a small (40S) and a large (60S) subunit. The 40S subunit contains about 33 different proteins and 1 molecule of RNA (18S). The 60S subunit contains about 49 different proteins and 3 molecules of RNA (25S, 5.8S and 5S). Interacts with ribosomal protein S21.

The protein resides in the cytoplasm. Functionally, required for the assembly and/or stability of the 40S ribosomal subunit. Required for the processing of the 20S rRNA-precursor to mature 18S rRNA in a late step of the maturation of 40S ribosomal subunits. In Chlamydomonas reinhardtii (Chlamydomonas smithii), this protein is Small ribosomal subunit protein uS2.